The chain runs to 2476 residues: MLGLPALAGPMAMPHPPLIPSTPTLLAFSFPGGFYMLLDPKNAKPRQRSALLSPLIQSSGCLSLSFQYTQRGQASGATLMVYASVLGSIRKHTLFSGQPGPSWQPVSVNYTSQGQIQFTLVGVFGKIPEPAVAVDAISIAPCEESFPQCDFEDNAHPFCDWVQASQDGGYWRQGNKNTFIQPAGPFGISLNGEGHYIFLETDKFSQAGQSFRLVSRPFCAPAVICVTFTYHMYGLGQGTKLRLLLGSPAGSPPSSLWERVGPQSPEWLNTSVTIPSGHQQPMQLIFEAVRGTNTAFVVALGFVLINHGTCRGPSETSVSTEKPVAPTEKPTVPSEIYTIPTEKPMVHMEKPIVHTEKPTVPTEKPTIPTEKSTVPTKKPTVFKEPTLPPEGPTVPAERPTTPPEGPAVPPKGPTVLTEWPTSHTEKSTVHTEKPILPTGKSTIPTEKPMVPTKRTTTPTERTTIPAEKPTVPIEKPMVPTERTTIPTERTTIPTEKPTVPTEKLTVPTEKPIVPTEKPIVPTEKHTIPTEKLTVLTERTTTPTERTTIPTEKPTVPTEKPSVPTEKPTVPTEEPTIPTEKLTVPTERTTTPTKRTTTPTIRTTTPTIRTTTPTERTTTPTIRTTTPTERTTIPTKKTTVPTEKTIIPTERTIAPTTPQPSPTLVPTQPAAVVMPSTSATTVTPRTTIASCPPNAHFERCACPVSCQSPTPNCELFCKPGCVCDPGFLFSGSHCVNASSCDCFYNDNYYKLGTDWFSPNCTEHCHCRPSSRMECQTFKCGTHTVCQLKNGQYGCHPYGSATCSVYGDPHYLTFDGRRFNFMGKCTYILAQPCGNLTEHFFRVLVKKEERGQEGVSCLSKVYVTLPESTVTLLKGRHTLVGGQRVTLPAIPSRGVFLAPSGRFVELQTAFGLRVRWDGDQQLFVSVPSTFSGKLCGLCGDYDGDSSNDNQKPDGSPAKDEKELGSSWQTSEDADQQCEENQVSPPSCNTALQNTMSGPEFCGQLVAPHGVFEACLPHLRASSFFKSCTFDMCNFQGLQHMLCAHMSALTENCQDAGYTVKPWRGPQFCPLACPRNSRYTLCARLCPDTCHSEFSGRACKDRCVEGCECDPGFVLSGLQCVSRSECGCLDSTAGYVKVGERWFKPGCRQLCICEGNNRTRCVLWRCQAQEFCGQQDGIYGCHAQGSATCTVSGDPHYLTFDGALHHFTGTCTYTLTKPCWLRSLENSFLVSATNEFRGGNLEASYVRAVQVQVFNLRISLIKGRKVTLDGRRVALPLWPAQGRVSITSSGSFILLYTDFGLQVRYDGDHLVEVTVPSSYAGRLCGLCGNYNNNSLDDILQPDKRPASSSVRLGASWKINELSEPGCFAEGGKPPRCLGKEVADAWRKNCDVLMNPQGPFSQCHRVVAPQSSFSSCLYGQCATKGDTLTLCRSLQAYASLCARAGQALTWRNGTFCPLKCPSGSSYSTCANPCPATCLSLNNPSYCPSTLPCAEGCECQKGHILSGTSCVPLSQCGCTTQRGSYHPVGESWYTDNSCSRLCTCSAHNNISCRQASCKPSQMCWPQDGLIRCRVAGMGVCRIPDTSHYVSFDGSYHAVRGNCTYVLVKICHSTMDLPFFKISGENGKREGQPPAFYLRQVYVDIFNTLVTLKQDQVLINGTRVSLPATTQIRGVRVISRDGYTVLTINIGVQVKFDGRGFLEVEIPKAYYGRTCGVCGNFNDEEEDELMMPSDALALDDVMYVDSWRDKEIDPNCQEDDRKTEAESQEQPSANCRPADLERAQEQCQAAFQAPAWANCATRVVLSPYVRSCTHKLCEFGGLNRAFCESLQAFGAACQAQGIKPPVWRNSSFCPLDCSAHSVYTSCVPSCLPSCQDPEGQCTGAGAPSTCEEGCICEPGYVLSEQQCVARSQCGCRDARGTFLPVGRFRLSSGCSQMCVCTAGAIECRPFTCPSGSQCEPNEDGKDFCQPNSSNLCSVFGDPHYRTFDGLSYRFQGRMTYTLVKTLDVLPDGVEPLVVEGRNKVYPSLTPVFLQEIIVMVYGYTVQLQAELELVVNGQKVSIPYKPNEYLQVTLRGRRLYLVTDFELVVSFNGRNNAVIAMPSTYLGLVRGLCGNYDKNKRNDFMLPNGSFTQNLLVFGNSWEVKAKEGHPRFSRAIREEEEKNEESGFQNVSECSPEQLELVNHTQACGVLVDPQGPFAACHQIVAPGPFQEHCVFDLCAAPGPKEQEELRCQVLSGYAIICQESGPTLAGWRDHTHCALPCPANTVYQSCMTPCPASCATLAVPRACDGPCVEGCASLPGYIYSGAQSLPMAHCGCTNNGVYYQQGDSFVTENCSQRCTCASSGVLLCEPLSCRPGEICTLGNLTRGCFRDSPCLQNPCQNDGRCREQGTHFTCECELGYGGDLCTEPRGVPSPKKPEASNRVAILLGMLMPTVLLVPAVTRVSRKRRRRRRPSRERTQSQNRGKRAGTDCAPEQAYKVA.

The first 29 residues, 1-29, serve as a signal peptide directing secretion; sequence MLGLPALAGPMAMPHPPLIPSTPTLLAFS. Over 30-2418 the chain is Extracellular; the sequence is FPGGFYMLLD…SPKKPEASNR (2389 aa). MAM domains follow at residues 31 to 144 and 147 to 312; these read PGGF…PCEE and PQCD…TCRG. Asn-109 and Asn-269 each carry an N-linked (GlcNAc...) asparagine glycan. 3 disordered regions span residues 313 to 332, 358 to 462, and 537 to 632; these read PSET…KPTV, PTVP…TERT, and ERTT…RTTI. The 53 X approximate heptapeptide repeats (mucin-like domain) stretch occupies residues 319 to 687; sequence STEKPVAPTE…ATTVTPRTTI (369 aa). Over residues 358-373 the composition is skewed to low complexity; sequence PTVPTEKPTIPTEKST. Pro residues predominate over residues 400–412; the sequence is TTPPEGPAVPPKG. Over residues 423–433 the composition is skewed to basic and acidic residues; sequence HTEKSTVHTEK. Positions 451-462 are enriched in low complexity; it reads PTKRTTTPTERT. In terms of domain architecture, TIL 1 spans 690 to 739; it reads CPPNAHFERCACPVSCQSPTPNCELFCKPGCVCDPGFLFSGSHCVNASSC. Residues Asn-735, Asn-758, and Asn-833 are each glycosylated (N-linked (GlcNAc...) asparagine). The 55-residue stretch at 740-794 folds into the VWFC 1 domain; sequence DCFYNDNYYKLGTDWFSPNCTEHCHCRPSSRMECQTFKCGTHTVCQLKNGQYGCH. Residues 799–976 enclose the VWFD 1 domain; that stretch reads ATCSVYGDPH…TSEDADQQCE (178 aa). 2 disulfides stabilise this stretch: Cys-801-Cys-936 and Cys-823-Cys-975. The segment at 943 to 983 is disordered; sequence SSNDNQKPDGSPAKDEKELGSSWQTSEDADQQCEENQVSPP. Positions 1070–1123 constitute a TIL 2 domain; the sequence is CPRNSRYTLCARLCPDTCHSEFSGRACKDRCVEGCECDPGFVLSGLQCVSRSEC. The region spanning 1124–1180 is the VWFC 2 domain; it reads GCLDSTAGYVKVGERWFKPGCRQLCICEGNNRTRCVLWRCQAQEFCGQQDGIYGCHA. An N-linked (GlcNAc...) asparagine glycan is attached at Asn-1154. One can recognise a VWFD 2 domain in the interval 1184-1364; sequence ATCTVSGDPH…INELSEPGCF (181 aa). Cystine bridges form between Cys-1186-Cys-1324 and Cys-1208-Cys-1363. Asn-1329 and Asn-1448 each carry an N-linked (GlcNAc...) asparagine glycan. One can recognise a TIL 3 domain in the interval 1456–1511; sequence CPSGSSYSTCANPCPATCLSLNNPSYCPSTLPCAEGCECQKGHILSGTSCVPLSQC. The region spanning 1512–1568 is the VWFC 3 domain; that stretch reads GCTTQRGSYHPVGESWYTDNSCSRLCTCSAHNNISCRQASCKPSQMCWPQDGLIRCR. N-linked (GlcNAc...) asparagine glycans are attached at residues Asn-1544, Asn-1596, and Asn-1654. In terms of domain architecture, VWFD 3 spans 1573-1751; that stretch reads GVCRIPDTSH…RDKEIDPNCQ (179 aa). 2 disulfide bridges follow: Cys-1575–Cys-1712 and Cys-1597–Cys-1750. The span at 1747 to 1759 shows a compositional bias: basic and acidic residues; the sequence is DPNCQEDDRKTEA. Residues 1747–1768 form a disordered region; the sequence is DPNCQEDDRKTEAESQEQPSAN. The N-linked (GlcNAc...) asparagine glycan is linked to Asn-1843. The region spanning 1851–1907 is the TIL 4 domain; it reads CSAHSVYTSCVPSCLPSCQDPEGQCTGAGAPSTCEEGCICEPGYVLSEQQCVARSQC. The region spanning 1908-1963 is the VWFC 4 domain; the sequence is GCRDARGTFLPVGRFRLSSGCSQMCVCTAGAIECRPFTCPSGSQCEPNEDGKDFCQ. Asn-1965 carries an N-linked (GlcNAc...) asparagine glycan. The VWFD 4 domain occupies 1968-2145; sequence NLCSVFGDPH…WEVKAKEGHP (178 aa). Cys-1970 and Cys-2107 form a disulfide bridge. N-linked (GlcNAc...) asparagine glycans are attached at residues Asn-2122, Asn-2165, and Asn-2178. Positions 2257 to 2310 constitute a TIL 5 domain; it reads CPANTVYQSCMTPCPASCATLAVPRACDGPCVEGCASLPGYIYSGAQSLPMAHC. The VWFC 5 domain occupies 2311 to 2365; the sequence is GCTNNGVYYQQGDSFVTENCSQRCTCASSGVLLCEPLSCRPGEICTLGNLTRGCF. N-linked (GlcNAc...) asparagine glycosylation is found at Asn-2329 and Asn-2359. The region spanning 2366–2402 is the EGF-like domain; the sequence is RDSPCLQNPCQNDGRCREQGTHFTCECELGYGGDLCT. 3 cysteine pairs are disulfide-bonded: Cys-2370-Cys-2381, Cys-2375-Cys-2390, and Cys-2392-Cys-2401. Residues 2419 to 2439 traverse the membrane as a helical segment; sequence VAILLGMLMPTVLLVPAVTRV. A disordered region spans residues 2438–2476; that stretch reads RVSRKRRRRRRPSRERTQSQNRGKRAGTDCAPEQAYKVA. Over residues 2439–2450 the composition is skewed to basic residues; sequence VSRKRRRRRRPS. The Cytoplasmic portion of the chain corresponds to 2440-2476; it reads SRKRRRRRRPSRERTQSQNRGKRAGTDCAPEQAYKVA.

In terms of assembly, probably forms covalent oligomers. In terms of processing, the MAM domains and the mucin-like domains are missing from the zonadhesin that binds to the egg extracellular matrix. Processing might occur during sperm maturation and/or capacitation. In testis, primarily in haploid spermatids. Not in lung, liver, heart, spleen, brain, kidney, epididymis.

The protein localises to the cell membrane. Functionally, binds in a species-specific manner to the zona pellucida of the egg. May be involved in gamete recognition and/or signaling. The protein is Zonadhesin (ZAN) of Sus scrofa (Pig).